Here is a 790-residue protein sequence, read N- to C-terminus: Spermatogenesis-associated protein 20 (790 aa).

Residues 1-19 (MSHHSSPPPKHKGEHKGHG) are compositionally biased toward basic residues. The tract at residues 1–67 (MSHHSSPPPK…PPPAPPKTVN (67 aa)) is disordered. Ser-5 bears the Phosphoserine mark. A compositionally biased stretch (basic and acidic residues) spans 23–36 (GSERGSSSRDKDRS). At Ser-653 the chain carries Phosphoserine.

The protein resides in the secreted. Its function is as follows. May play a role in fertility regulation. The polypeptide is Spermatogenesis-associated protein 20 (Spata20) (Mus musculus (Mouse)).